An 83-amino-acid chain; its full sequence is Cell division topological specificity factor (83 aa).

Belongs to the MinE family.

In terms of biological role, prevents the cell division inhibition by proteins MinC and MinD at internal division sites while permitting inhibition at polar sites. This ensures cell division at the proper site by restricting the formation of a division septum at the midpoint of the long axis of the cell. This Marinobacter nauticus (strain ATCC 700491 / DSM 11845 / VT8) (Marinobacter aquaeolei) protein is Cell division topological specificity factor.